A 307-amino-acid chain; its full sequence is UDP-N-acetylenolpyruvoylglucosamine reductase (307 aa).

Residues 33–198 (KVGGPADIFV…LNATFALQKG (166 aa)) form the FAD-binding PCMH-type domain. Residue Arg177 is part of the active site. The active-site Proton donor is the Ser227. Glu297 is a catalytic residue.

Belongs to the MurB family. FAD is required as a cofactor.

It is found in the cytoplasm. It carries out the reaction UDP-N-acetyl-alpha-D-muramate + NADP(+) = UDP-N-acetyl-3-O-(1-carboxyvinyl)-alpha-D-glucosamine + NADPH + H(+). It participates in cell wall biogenesis; peptidoglycan biosynthesis. Its function is as follows. Cell wall formation. In Clostridium novyi (strain NT), this protein is UDP-N-acetylenolpyruvoylglucosamine reductase.